Reading from the N-terminus, the 214-residue chain is Probable chemoreceptor glutamine deamidase CheD (214 aa).

The protein belongs to the CheD family.

The enzyme catalyses L-glutaminyl-[protein] + H2O = L-glutamyl-[protein] + NH4(+). Probably deamidates glutamine residues to glutamate on methyl-accepting chemotaxis receptors (MCPs), playing an important role in chemotaxis. In Vibrio vulnificus (strain CMCP6), this protein is Probable chemoreceptor glutamine deamidase CheD.